The following is a 228-amino-acid chain: Trichome differentiation protein GL1 (228 aa).

HTH myb-type domains lie at 11 to 63 and 64 to 118; these read NQEY…MNYL and SPNV…SKKL. 2 consecutive DNA-binding regions (H-T-H motif) follow at residues 39–63 and 91–114; these read WNRI…MNYL and WSLI…NTHL.

Homodimer and heterodimer with MYB82. Interacts directly with GL3 and BHLH2. Part of a complex made of GL1, GL3 or BHLH2, and TTG1. Also interacts with BHLH2/EGL3/MYC146 and BHLH12/MYC1. Interacts with MYB82. As to expression, expressed in leaves, stems and flowers. Expressed in trichome cells and in leaf primordia.

It is found in the nucleus. In terms of biological role, transcription activator, when associated with BHLH2/EGL3/MYC146 or BHLH12/MYC1. Involved in epidermal cell fate specification in leaves. Together with TTG1 and GL3, promotes trichome formation and endoreplication. Regulates the production of a signal that induces hair (trichome) precursor cells on leaf primordia to differentiate. Binds to the WER-binding sites (WBS) promoter regions and activates the transcription of target genes. This is Trichome differentiation protein GL1 from Arabidopsis thaliana (Mouse-ear cress).